The following is a 335-amino-acid chain: Adenosine deaminase (335 aa).

2 residues coordinate Zn(2+): H12 and H14. Positions 14 and 16 each coordinate substrate. A Zn(2+)-binding site is contributed by H197. Residue E200 is the Proton donor of the active site. A Zn(2+)-binding site is contributed by D278.

It belongs to the metallo-dependent hydrolases superfamily. Adenosine and AMP deaminases family. Adenosine deaminase subfamily. The cofactor is Zn(2+).

The catalysed reaction is adenosine + H2O + H(+) = inosine + NH4(+). It carries out the reaction 2'-deoxyadenosine + H2O + H(+) = 2'-deoxyinosine + NH4(+). Its function is as follows. Catalyzes the hydrolytic deamination of adenosine and 2-deoxyadenosine. The sequence is that of Adenosine deaminase from Clostridium botulinum (strain ATCC 19397 / Type A).